Here is a 350-residue protein sequence, read N- to C-terminus: Opsin, longwave 563 nm (350 aa).

The Extracellular segment spans residues 1-45 (HRLAGRHPQDNYEDSTQSSIFTYTNSNSTRGPFEGPNYHIAPRWV). A glycan (N-linked (GlcNAc...) asparagine) is linked at N27. Residues 46–70 (YHLTSVWMLFVVVASVFTNGLVLAA) traverse the membrane as a helical segment. The Cytoplasmic segment spans residues 71–82 (TMKFKKLRHPLN). A helical membrane pass occupies residues 83-108 (WILVNLAIADLAETVIASTISVVNQV). At 109-122 (HGYFVLGHPMCVLE) the chain is on the extracellular side. A disulfide bridge connects residues C119 and C196. Residues 123–142 (GYTVSLCGITGLWSLAIISW) form a helical membrane-spanning segment. Topologically, residues 143–161 (ERWLVVCKPFGNVRFDAKL) are cytoplasmic. The helical transmembrane segment at 162–185 (AIVGVAFSWIWSAVWTAPPIFGWS) threads the bilayer. Topologically, residues 186–211 (RYWPHGLKTSCGPDVFSGSSYPGVQS) are extracellular. The chain crosses the membrane as a helical span at residues 212-239 (YMIVLMITCCFLPLGIIVLCYLQVWLAI). Over 240-261 (RAVAKQQKESESTQKAEKEVTR) the chain is Cytoplasmic. Residues 262–285 (MVVVMIVAYCVCWGPYTFFACFAA) form a helical membrane-spanning segment. The Extracellular segment spans residues 286–293 (ANPGYAFH). The chain crosses the membrane as a helical span at residues 294 to 318 (PLMAALPAYFAKSATIYNPIIYVFM). Position 305 is an N6-(retinylidene)lysine (K305). The Cytoplasmic portion of the chain corresponds to 319 to 350 (NRQFRNCILQLFGKKVDDGSELSSASKTEVSS).

The protein belongs to the G-protein coupled receptor 1 family. Opsin subfamily. Post-translationally, phosphorylated on some or all of the serine and threonine residues present in the C-terminal region. The color pigments are found in the cone photoreceptor cells.

It is found in the membrane. In terms of biological role, visual pigments are the light-absorbing molecules that mediate vision. They consist of an apoprotein, opsin, covalently linked to cis-retinal. This Callithrix jacchus (White-tufted-ear marmoset) protein is Opsin, longwave 563 nm.